The chain runs to 253 residues: 1-(5-phosphoribosyl)-5-[(5-phosphoribosylamino)methylideneamino] imidazole-4-carboxamide isomerase (253 aa).

Asp8 serves as the catalytic Proton acceptor. Residue Asp129 is the Proton donor of the active site.

Belongs to the HisA/HisF family.

The protein resides in the cytoplasm. It carries out the reaction 1-(5-phospho-beta-D-ribosyl)-5-[(5-phospho-beta-D-ribosylamino)methylideneamino]imidazole-4-carboxamide = 5-[(5-phospho-1-deoxy-D-ribulos-1-ylimino)methylamino]-1-(5-phospho-beta-D-ribosyl)imidazole-4-carboxamide. The protein operates within amino-acid biosynthesis; L-histidine biosynthesis; L-histidine from 5-phospho-alpha-D-ribose 1-diphosphate: step 4/9. In Microcystis aeruginosa (strain NIES-843 / IAM M-2473), this protein is 1-(5-phosphoribosyl)-5-[(5-phosphoribosylamino)methylideneamino] imidazole-4-carboxamide isomerase.